The primary structure comprises 64 residues: Large ribosomal subunit protein uL29 (64 aa).

This sequence belongs to the universal ribosomal protein uL29 family.

This Psychrobacter sp. (strain PRwf-1) protein is Large ribosomal subunit protein uL29.